An 85-amino-acid polypeptide reads, in one-letter code: Transcription factor 4 (85 aa).

The 54-residue stretch at 7 to 60 (ERRMANNARERLRVRDINEAFKELGRMVQLHLKSDKPQTKLLILHQAVAVILSL) folds into the bHLH domain. Residues 62-85 (QQVRERNLNPKAACLKRREEEKVS) form a class A specific domain region.

As to quaternary structure, efficient DNA binding requires dimerization with another bHLH protein. Forms homo- or heterooligomers with myogenin.

The protein localises to the nucleus. Its function is as follows. Transcription factor that binds to the immunoglobulin enhancer Mu-E5/KE5-motif. Involved in the initiation of neuronal differentiation. Binds to the E-box present in the somatostatin receptor 2 initiator element (SSTR2-INR) to activate transcription. The polypeptide is Transcription factor 4 (TCF4) (Gallus gallus (Chicken)).